The sequence spans 266 residues: Zinc transport system ATP-binding protein TroB (266 aa).

Residues 11-243 (VQVDDLTLAY…YVQRAYGGRI (233 aa)) enclose the ABC transporter domain. Residue 43–50 (GPNGAGKS) coordinates ATP.

It belongs to the ABC transporter superfamily.

In terms of biological role, part of an ATP-driven transport system TroABCD for zinc. The sequence is that of Zinc transport system ATP-binding protein TroB (troB) from Treponema pallidum (strain Nichols).